An 846-amino-acid chain; its full sequence is DNA mismatch repair protein MutS (846 aa).

610 to 617 (GPNMGGKS) provides a ligand contact to ATP.

This sequence belongs to the DNA mismatch repair MutS family.

Functionally, this protein is involved in the repair of mismatches in DNA. It is possible that it carries out the mismatch recognition step. This protein has a weak ATPase activity. In Legionella pneumophila (strain Paris), this protein is DNA mismatch repair protein MutS.